We begin with the raw amino-acid sequence, 261 residues long: Antiviral protein S (261 aa).

2 cysteine pairs are disulfide-bonded: cysteine 34-cysteine 258 and cysteine 84-cysteine 105. Glutamate 175 is a catalytic residue.

The protein belongs to the ribosome-inactivating protein family. Type 1 RIP subfamily.

It carries out the reaction Endohydrolysis of the N-glycosidic bond at one specific adenosine on the 28S rRNA.. Functionally, inhibits viral infection of plants, and protein synthesis in vitro. The chain is Antiviral protein S from Phytolacca americana (American pokeweed).